Consider the following 369-residue polypeptide: 3 beta-hydroxysteroid dehydrogenase type 7 (369 aa).

Residue tyrosine 159 is the Proton acceptor of the active site. An NAD(+)-binding site is contributed by lysine 163. Transmembrane regions (helical) follow at residues 289-309 (LLPY…QWLL) and 312-334 (LVLY…FTVS).

Belongs to the 3-beta-HSD family. As to expression, predominantly expressed in liver.

It localises to the endoplasmic reticulum membrane. It catalyses the reaction 7alpha-hydroxycholesterol + NAD(+) = 7alpha-hydroxycholest-4-en-3-one + NADH + H(+). The enzyme catalyses 7alpha,25-dihydroxycholesterol + NAD(+) = 7alpha,25-dihydroxy-4-cholesten-3-one + NADH + H(+). The catalysed reaction is (25R)-cholest-5-en-3beta,7alpha,26-triol + NAD(+) = (25R)-7alpha,26-dihydroxycholest-4-en-3-one + NADH + H(+). It carries out the reaction (24S)-7alpha-dihydroxycholesterol + NAD(+) = (24S)-7alpha,24-dihydroxycholest-4-en-3-one + NADH + H(+). Its pathway is lipid metabolism; steroid biosynthesis. In terms of biological role, the 3-beta-HSD enzymatic system plays a crucial role in the biosynthesis of all classes of hormonal steroids. HSD VII is active against four 7-alpha-hydroxylated sterols. Does not metabolize several different C(19/21) steroids as substrates. Involved in bile acid synthesis. Plays a key role in cell positioning and movement in lymphoid tissues by mediating degradation of 7-alpha,25-dihydroxycholesterol (7-alpha,25-OHC): 7-alpha,25-OHC acts as a ligand for the G protein-coupled receptor GPR183/EBI2, a chemotactic receptor for a number of lymphoid cells. In Mus musculus (Mouse), this protein is 3 beta-hydroxysteroid dehydrogenase type 7.